A 76-amino-acid polypeptide reads, in one-letter code: Large ribosomal subunit protein bL31 (76 aa).

Belongs to the bacterial ribosomal protein bL31 family. Type A subfamily. As to quaternary structure, part of the 50S ribosomal subunit.

In terms of biological role, binds the 23S rRNA. The protein is Large ribosomal subunit protein bL31 of Gluconacetobacter diazotrophicus (strain ATCC 49037 / DSM 5601 / CCUG 37298 / CIP 103539 / LMG 7603 / PAl5).